A 58-amino-acid polypeptide reads, in one-letter code: Large ribosomal subunit protein uL30 (58 aa).

Belongs to the universal ribosomal protein uL30 family. As to quaternary structure, part of the 50S ribosomal subunit.

In Vibrio vulnificus (strain CMCP6), this protein is Large ribosomal subunit protein uL30.